Consider the following 714-residue polypeptide: Fatty acid oxidation complex subunit alpha (714 aa).

The interval 1-190 is enoyl-CoA hydratase; that stretch reads MEMASAFTLN…KLGLVDDVVP (190 aa). The interval 306 to 714 is 3-hydroxyacyl-CoA dehydrogenase; it reads APLNSVGILG…FWKTTATDLQ (409 aa).

In the N-terminal section; belongs to the enoyl-CoA hydratase/isomerase family. The protein in the central section; belongs to the 3-hydroxyacyl-CoA dehydrogenase family. In terms of assembly, heterotetramer of two alpha chains (FadJ) and two beta chains (FadI).

The protein localises to the cytoplasm. The catalysed reaction is a (3S)-3-hydroxyacyl-CoA = a (2E)-enoyl-CoA + H2O. The enzyme catalyses a 4-saturated-(3S)-3-hydroxyacyl-CoA = a (3E)-enoyl-CoA + H2O. It catalyses the reaction a (3S)-3-hydroxyacyl-CoA + NAD(+) = a 3-oxoacyl-CoA + NADH + H(+). It carries out the reaction (3S)-3-hydroxybutanoyl-CoA = (3R)-3-hydroxybutanoyl-CoA. It participates in lipid metabolism; fatty acid beta-oxidation. Its function is as follows. Catalyzes the formation of a hydroxyacyl-CoA by addition of water on enoyl-CoA. Also exhibits 3-hydroxyacyl-CoA epimerase and 3-hydroxyacyl-CoA dehydrogenase activities. In Shigella flexneri, this protein is Fatty acid oxidation complex subunit alpha.